The primary structure comprises 104 residues: ATP synthase subunit c (104 aa).

2 helical membrane passes run 31-51 and 75-95; these read SVVA…IGMG and MFIA…VAMI.

This sequence belongs to the ATPase C chain family. In terms of assembly, F-type ATPases have 2 components, F(1) - the catalytic core - and F(0) - the membrane proton channel. F(1) has five subunits: alpha(3), beta(3), gamma(1), delta(1), epsilon(1). F(0) has three main subunits: a(1), b(2) and c(10-14). The alpha and beta chains form an alternating ring which encloses part of the gamma chain. F(1) is attached to F(0) by a central stalk formed by the gamma and epsilon chains, while a peripheral stalk is formed by the delta and b chains.

It is found in the cell inner membrane. F(1)F(0) ATP synthase produces ATP from ADP in the presence of a proton or sodium gradient. F-type ATPases consist of two structural domains, F(1) containing the extramembraneous catalytic core and F(0) containing the membrane proton channel, linked together by a central stalk and a peripheral stalk. During catalysis, ATP synthesis in the catalytic domain of F(1) is coupled via a rotary mechanism of the central stalk subunits to proton translocation. Functionally, key component of the F(0) channel; it plays a direct role in translocation across the membrane. A homomeric c-ring of between 10-14 subunits forms the central stalk rotor element with the F(1) delta and epsilon subunits. The chain is ATP synthase subunit c from Aliarcobacter butzleri (strain RM4018) (Arcobacter butzleri).